The sequence spans 382 residues: Anhydro-N-acetylmuramic acid kinase (382 aa).

Residue 22 to 29 (GTSMDGVD) coordinates ATP.

This sequence belongs to the anhydro-N-acetylmuramic acid kinase family.

The catalysed reaction is 1,6-anhydro-N-acetyl-beta-muramate + ATP + H2O = N-acetyl-D-muramate 6-phosphate + ADP + H(+). It participates in amino-sugar metabolism; 1,6-anhydro-N-acetylmuramate degradation. Its pathway is cell wall biogenesis; peptidoglycan recycling. Its function is as follows. Catalyzes the specific phosphorylation of 1,6-anhydro-N-acetylmuramic acid (anhMurNAc) with the simultaneous cleavage of the 1,6-anhydro ring, generating MurNAc-6-P. Is required for the utilization of anhMurNAc either imported from the medium or derived from its own cell wall murein, and thus plays a role in cell wall recycling. The protein is Anhydro-N-acetylmuramic acid kinase of Burkholderia vietnamiensis (strain G4 / LMG 22486) (Burkholderia cepacia (strain R1808)).